A 382-amino-acid polypeptide reads, in one-letter code: ATP phosphoribosyltransferase regulatory subunit (382 aa).

It belongs to the class-II aminoacyl-tRNA synthetase family. HisZ subfamily. As to quaternary structure, heteromultimer composed of HisG and HisZ subunits.

The protein resides in the cytoplasm. Its pathway is amino-acid biosynthesis; L-histidine biosynthesis; L-histidine from 5-phospho-alpha-D-ribose 1-diphosphate: step 1/9. Its function is as follows. Required for the first step of histidine biosynthesis. May allow the feedback regulation of ATP phosphoribosyltransferase activity by histidine. The polypeptide is ATP phosphoribosyltransferase regulatory subunit (Burkholderia thailandensis (strain ATCC 700388 / DSM 13276 / CCUG 48851 / CIP 106301 / E264)).